Consider the following 296-residue polypeptide: Homoserine kinase (296 aa).

84-94 (PLARGLGSSSS) serves as a coordination point for ATP.

The protein belongs to the GHMP kinase family. Homoserine kinase subfamily.

The protein resides in the cytoplasm. The catalysed reaction is L-homoserine + ATP = O-phospho-L-homoserine + ADP + H(+). Its pathway is amino-acid biosynthesis; L-threonine biosynthesis; L-threonine from L-aspartate: step 4/5. Its function is as follows. Catalyzes the ATP-dependent phosphorylation of L-homoserine to L-homoserine phosphate. The protein is Homoserine kinase of Lactococcus lactis subsp. cremoris (strain SK11).